The primary structure comprises 302 residues: Aquaporin NIP3-1 (302 aa).

Residues Met-1 to Asp-31 are disordered. Low complexity predominate over residues Pro-7 to Pro-21. 2 helical membrane-spanning segments follow: residues Leu-76–Val-96 and Gly-102–Leu-122. An NPA 1 motif is present at residues Asn-133–Ser-135. 3 consecutive transmembrane segments (helical) span residues Leu-149–Leu-169, Ala-193–Thr-213, and Ala-217–Ala-237. Residues Asn-246 to Val-248 carry the NPA 2 motif. Residues Trp-264–Val-284 form a helical membrane-spanning segment.

This sequence belongs to the MIP/aquaporin (TC 1.A.8) family. NIP (TC 1.A.8.12) subfamily.

The protein localises to the membrane. In terms of biological role, aquaporins facilitate the transport of water and small neutral solutes across cell membranes. This is Aquaporin NIP3-1 (NIP3-1) from Zea mays (Maize).